The primary structure comprises 422 residues: Lactose-binding protein (422 aa).

An N-terminal signal peptide occupies residues 1–28 (MDYSRLLKRSVSAALTAAALLCSTAAFA). Residues 246–277 (SNDGIRALTSGDVASVLRGVWITGTVKSQPDQ) are lactose-binding.

It belongs to the bacterial solute-binding protein 1 family.

It is found in the periplasm. Its function is as follows. Part of the binding-protein-dependent transport system for lactose. The sequence is that of Lactose-binding protein (lacE) from Rhizobium radiobacter (Agrobacterium tumefaciens).